Reading from the N-terminus, the 157-residue chain is SsrA-binding protein (157 aa).

It belongs to the SmpB family.

The protein localises to the cytoplasm. Functionally, required for rescue of stalled ribosomes mediated by trans-translation. Binds to transfer-messenger RNA (tmRNA), required for stable association of tmRNA with ribosomes. tmRNA and SmpB together mimic tRNA shape, replacing the anticodon stem-loop with SmpB. tmRNA is encoded by the ssrA gene; the 2 termini fold to resemble tRNA(Ala) and it encodes a 'tag peptide', a short internal open reading frame. During trans-translation Ala-aminoacylated tmRNA acts like a tRNA, entering the A-site of stalled ribosomes, displacing the stalled mRNA. The ribosome then switches to translate the ORF on the tmRNA; the nascent peptide is terminated with the 'tag peptide' encoded by the tmRNA and targeted for degradation. The ribosome is freed to recommence translation, which seems to be the essential function of trans-translation. In Chlorobium luteolum (strain DSM 273 / BCRC 81028 / 2530) (Pelodictyon luteolum), this protein is SsrA-binding protein.